The primary structure comprises 185 residues: Elongation factor P 1 (185 aa).

This sequence belongs to the elongation factor P family.

The protein localises to the cytoplasm. It participates in protein biosynthesis; polypeptide chain elongation. In terms of biological role, involved in peptide bond synthesis. Stimulates efficient translation and peptide-bond synthesis on native or reconstituted 70S ribosomes in vitro. Probably functions indirectly by altering the affinity of the ribosome for aminoacyl-tRNA, thus increasing their reactivity as acceptors for peptidyl transferase. The sequence is that of Elongation factor P 1 (efp1) from Chlamydia caviae (strain ATCC VR-813 / DSM 19441 / 03DC25 / GPIC) (Chlamydophila caviae).